Consider the following 391-residue polypeptide: Alkanesulfonate monooxygenase (391 aa).

It belongs to the SsuD family.

It catalyses the reaction an alkanesulfonate + FMNH2 + O2 = an aldehyde + FMN + sulfite + H2O + 2 H(+). Functionally, catalyzes the desulfonation of aliphatic sulfonates. This chain is Alkanesulfonate monooxygenase, found in Methylorubrum extorquens (strain CM4 / NCIMB 13688) (Methylobacterium extorquens).